The following is a 424-amino-acid chain: Serine--tRNA ligase (424 aa).

L-serine is bound at residue 231–233; that stretch reads TAE. 262–264 is an ATP binding site; the sequence is RSE. Glu285 serves as a coordination point for L-serine. Residue 349–352 participates in ATP binding; sequence EISS. Residue Ser385 coordinates L-serine.

It belongs to the class-II aminoacyl-tRNA synthetase family. Type-1 seryl-tRNA synthetase subfamily. As to quaternary structure, homodimer. The tRNA molecule binds across the dimer.

It is found in the cytoplasm. It catalyses the reaction tRNA(Ser) + L-serine + ATP = L-seryl-tRNA(Ser) + AMP + diphosphate + H(+). The catalysed reaction is tRNA(Sec) + L-serine + ATP = L-seryl-tRNA(Sec) + AMP + diphosphate + H(+). It functions in the pathway aminoacyl-tRNA biosynthesis; selenocysteinyl-tRNA(Sec) biosynthesis; L-seryl-tRNA(Sec) from L-serine and tRNA(Sec): step 1/1. Functionally, catalyzes the attachment of serine to tRNA(Ser). Is also able to aminoacylate tRNA(Sec) with serine, to form the misacylated tRNA L-seryl-tRNA(Sec), which will be further converted into selenocysteinyl-tRNA(Sec). This Bacillus cytotoxicus (strain DSM 22905 / CIP 110041 / 391-98 / NVH 391-98) protein is Serine--tRNA ligase.